We begin with the raw amino-acid sequence, 32 residues long: Conotoxin pr6d (32 aa).

Residue proline 5 is modified to 4-hydroxyproline. 3 cysteine pairs are disulfide-bonded: cysteine 7/cysteine 20, cysteine 14/cysteine 25, and cysteine 19/cysteine 30.

As to expression, expressed by the venom duct.

Its subcellular location is the secreted. In Conus parius (Cone snail), this protein is Conotoxin pr6d.